Consider the following 256-residue polypeptide: 5-keto-4-deoxy-D-glucarate aldolase (256 aa).

Catalysis depends on histidine 50, which acts as the Proton acceptor. Glutamine 151 is a binding site for substrate. Glutamate 153 provides a ligand contact to Mg(2+). 2 residues coordinate substrate: serine 178 and aspartate 179. Mg(2+) is bound at residue aspartate 179.

The protein belongs to the HpcH/HpaI aldolase family. KDGluc aldolase subfamily. In terms of assembly, homohexamer; trimer of dimers. Mg(2+) serves as cofactor.

The enzyme catalyses 5-dehydro-4-deoxy-D-glucarate = 2-hydroxy-3-oxopropanoate + pyruvate. It carries out the reaction 2-dehydro-3-deoxy-D-glucarate = 2-hydroxy-3-oxopropanoate + pyruvate. Its pathway is carbohydrate acid metabolism; galactarate degradation; D-glycerate from galactarate: step 2/3. Catalyzes the reversible retro-aldol cleavage of both 5-keto-4-deoxy-D-glucarate and 2-keto-3-deoxy-D-glucarate to pyruvate and tartronic semialdehyde. The sequence is that of 5-keto-4-deoxy-D-glucarate aldolase from Escherichia coli (strain ATCC 8739 / DSM 1576 / NBRC 3972 / NCIMB 8545 / WDCM 00012 / Crooks).